We begin with the raw amino-acid sequence, 56 residues long: UPF0434 protein CBUD_1597.1 (56 aa).

It belongs to the UPF0434 family.

This Coxiella burnetii (strain Dugway 5J108-111) protein is UPF0434 protein CBUD_1597.1.